The sequence spans 88 residues: Small ribosomal subunit protein bS20 (88 aa).

This sequence belongs to the bacterial ribosomal protein bS20 family.

Functionally, binds directly to 16S ribosomal RNA. This chain is Small ribosomal subunit protein bS20, found in Bartonella henselae (strain ATCC 49882 / DSM 28221 / CCUG 30454 / Houston 1) (Rochalimaea henselae).